The following is a 504-amino-acid chain: MQEAQVDVKVQSTKTLVMSSQYDKEIAAVAHYMHNYHINDRTTYQKARISLLDSLGCAIETVSKSAEVRSLLGPAVPGSKIPNGFRLPGTSYVLSPVEGAFDMGILIRYLDHNDALGGAEWGHPSDNLGAILSVMDWISRSSAAGIFTHNGPPMTMHTLLTATIKAYEIQGCYQLLNAFNIYGIDHVVLVKLASTAAVSWLLGLTEEQTMAAISHVWMDGQPTRVYRSGEDTIPRKGWAAGDACMRAVHIAFLVKHGQPGSPGALTNPRSGFYVKTFGDKGFQFARPFGEWAIRNVYLKTMPVEGHGISSVEAALIQRERLQERGLGLKDISGIDIRTTAAANLIINKTGRLHNAADRDHCIQYVIALAFIKGSPPEPEDYADDSPFATSQEIDALRDKTIIRPDEQLTRDYLDIEKKSAGAGMTIYLEDGTTMEEVLIEYPSGHMSNPKTKKLVEGKFERNMRLKFDDGEIMRIKDALNEDSMRVHEFLDLFVRKGQPGSPRL.

It belongs to the PrpD family. In terms of assembly, monomer.

It catalyses the reaction (4E,11E)-2-hydroxytrideca-4,11-dien-1,2,3-tricarboxylate + 2 H(+) = [4-(deca-1,8-diyl)-2,5-dioxo-2,5-dihydro-3-furanyl]acetate + 2 H2O. It functions in the pathway secondary metabolite biosynthesis. Functionally, alkylcitrate dehydratase; part of the gene cluster that mediates the biosynthesis of the antihypercholesterolemic agents phomoidrides which are dimeric anhydrides. Within the pathway, the alkylcitrate synthase (ACS) phiJ and the alkylcitrate dehydratase (ACDH) phiI produce the decarboxylated monomeric anhydrides by coupling the C12-fatty acyl product from phiA with oxalacetic acid. The pathway begins with the highly reducing polyketide synthase phiA that catalyzes the formation of a C12-fatty acyl-ACP, starting from one acetate and 5 malonate units. The hydrolase phiM is involved in the release of the C12-fatty acyl chain from phiA. The alkylcitrate synthase (ACS) phiJ and the alkylcitrate dehydratase (ACDH) phiI then give rise to decarboxylated monomeric anhydrides by coupling the C12-fatty acyl chain with oxalacetic acid. The cyclase phiC is responsible for the dimerization of the monomeric anhydrides which leads to the production of prephomoidride that contains the characteristic bicyclo[4.3.1]deca-1,6-diene system of phomoidrides. Iterative oxidation catalyzed by the alpha-ketoglutarate-dependent dioxygenase phiK produced then phomoidride A. Finally, the methyltransferase phiE converts phomoidride A to phomoidride B via an acetalization reaction. The phosphatidylethanolamine-binding protein phiB and phiN are not essential for dimerization and their functions have still to be determined. The chain is Alkylcitrate dehydratase phiI from Fungal sp. (strain ATCC 74256).